The following is a 180-amino-acid chain: Putative manganese efflux pump MntP (180 aa).

6 helical membrane-spanning segments follow: residues 1–21, 34–54, 63–83, 103–123, 129–149, and 160–180; these read MLSV…ISIT, ILWY…IGYV, ISTY…LNMI, VTLL…TFAI, VIPC…GIFI, and KFQI…LLGF.

This sequence belongs to the MntP (TC 9.B.29) family.

The protein localises to the cell membrane. Probably functions as a manganese efflux pump. The sequence is that of Putative manganese efflux pump MntP from Methanosphaera stadtmanae (strain ATCC 43021 / DSM 3091 / JCM 11832 / MCB-3).